The primary structure comprises 202 residues: Glycerol-3-phosphate acyltransferase (202 aa).

5 consecutive transmembrane segments (helical) span residues 3-23 (NLII…LILA), 87-107 (LLWS…YLLF), 118-138 (GAMI…WVVI), 144-164 (ISSL…FIFN), and 167-187 (LEIH…YKHL).

It belongs to the PlsY family. As to quaternary structure, probably interacts with PlsX.

It localises to the cell inner membrane. The catalysed reaction is an acyl phosphate + sn-glycerol 3-phosphate = a 1-acyl-sn-glycero-3-phosphate + phosphate. It participates in lipid metabolism; phospholipid metabolism. Catalyzes the transfer of an acyl group from acyl-phosphate (acyl-PO(4)) to glycerol-3-phosphate (G3P) to form lysophosphatidic acid (LPA). This enzyme utilizes acyl-phosphate as fatty acyl donor, but not acyl-CoA or acyl-ACP. This chain is Glycerol-3-phosphate acyltransferase, found in Campylobacter jejuni (strain RM1221).